We begin with the raw amino-acid sequence, 334 residues long: D-fructose 1,6-bisphosphatase class 2/sedoheptulose 1,7-bisphosphatase (334 aa).

Mn(2+) is bound by residues aspartate 33, glutamate 57, aspartate 85, and glutamate 88. Residues 88–90, tyrosine 119, 164–166, and 186–188 contribute to the substrate site; these read EGT, RAR, and DGD. Glutamate 213 lines the Mn(2+) pocket.

This sequence belongs to the FBPase class 2 family. In terms of assembly, homotetramer. It depends on Mn(2+) as a cofactor.

It carries out the reaction beta-D-fructose 1,6-bisphosphate + H2O = beta-D-fructose 6-phosphate + phosphate. The enzyme catalyses D-sedoheptulose 1,7-bisphosphate + H2O = D-sedoheptulose 7-phosphate + phosphate. Its pathway is carbohydrate biosynthesis; Calvin cycle. Its function is as follows. Catalyzes the hydrolysis of fructose 1,6-bisphosphate (Fru 1,6-P2) and sedoheptulose 1,7-bisphosphate (Sed 1,7-P2) to fructose 6-phosphate and sedoheptulose 7-phosphate, respectively. The protein is D-fructose 1,6-bisphosphatase class 2/sedoheptulose 1,7-bisphosphatase of Synechococcus sp. (strain CC9311).